The sequence spans 437 residues: Vacuolar protein sorting-associated protein 4A (437 aa).

The MIT domain occupies 2-80; sequence TTSTLQKAID…KDYLRNKEKH (79 aa). An N6-acetyllysine modification is found at Lys-8. Residues 15–37 are a coiled coil; it reads KATEEDKAKNYEEALRLYQHAVE. A disordered region spans residues 75–106; the sequence is RNKEKHGKKPVKENQSEGKGSDSDSEGDNPEK. The span at 84–96 shows a compositional bias: basic and acidic residues; the sequence is PVKENQSEGKGSD. Ser-95 and Ser-97 each carry phosphoserine. ATP is bound at residue 167–174; sequence GPPGTGKS.

It belongs to the AAA ATPase family. As to quaternary structure, proposed to be monomeric or homodimeric in nucleotide-free form and to oligomerize upon binding to ATP to form two stacked hexameric or heptameric rings with a central pore through which ESCRT-III substrates are translocated in an ATP-dependent manner. Interacts with CHMP1A, CHMP1B, CHMP2A, CHMP2B, CHMP3, CHMP4A, CHMP4B, CHMP4C and CHMP6. Interacts with VPS4B; the interaction suggests a heteromeric assembly with VPS4B. Interacts with SPAST. Interacts with IST1. Interacts with ZFYVE19/ANCHR; leading to retain it at midbody. As to expression, highly expressed in testis and moderately in heart and brain. Not detected in spleen, lung, liver, skeletal muscle or kidney.

It localises to the late endosome membrane. Its subcellular location is the midbody. It is found in the cytoplasm. The protein localises to the cytoskeleton. The protein resides in the spindle. The enzyme catalyses ATP + H2O = ADP + phosphate + H(+). In terms of biological role, involved in late steps of the endosomal multivesicular bodies (MVB) pathway. Recognizes membrane-associated ESCRT-III assemblies and catalyzes their disassembly, possibly in combination with membrane fission. Redistributes the ESCRT-III components to the cytoplasm for further rounds of MVB sorting. MVBs contain intraluminal vesicles (ILVs) that are generated by invagination and scission from the limiting membrane of the endosome and mostly are delivered to lysosomes enabling degradation of membrane proteins, such as stimulated growth factor receptors, lysosomal enzymes and lipids. It is required for proper accomplishment of various processes including the regulation of endosome size, primary cilium organization, mitotic spindle organization and chromosome segregation, and nuclear envelope sealing and spindle disassembly during anaphase. In conjunction with the ESCRT machinery also appears to function in topologically equivalent membrane fission events, such as the terminal stages of cytokinesis. Involved in cytokinesis: retained at the midbody by ZFYVE19/ANCHR and CHMP4C until abscission checkpoint signaling is terminated at late cytokinesis. It is then released following dephosphorylation of CHMP4C, leading to abscission. VPS4A/B are required for the exosomal release of SDCBP, CD63 and syndecan. Critical for normal erythroblast cytokinesis and correct erythropoiesis. The protein is Vacuolar protein sorting-associated protein 4A of Mus musculus (Mouse).